Reading from the N-terminus, the 521-residue chain is Protein nucleotidyltransferase YdiU (521 aa).

G109, G111, R112, K131, D143, G144, R194, and R201 together coordinate ATP. The Proton acceptor role is filled by D270. Mg(2+) is bound by residues N271 and D280. Residue D280 coordinates ATP.

This sequence belongs to the SELO family. Requires Mg(2+) as cofactor. Mn(2+) serves as cofactor.

The enzyme catalyses L-seryl-[protein] + ATP = 3-O-(5'-adenylyl)-L-seryl-[protein] + diphosphate. It catalyses the reaction L-threonyl-[protein] + ATP = 3-O-(5'-adenylyl)-L-threonyl-[protein] + diphosphate. The catalysed reaction is L-tyrosyl-[protein] + ATP = O-(5'-adenylyl)-L-tyrosyl-[protein] + diphosphate. It carries out the reaction L-histidyl-[protein] + UTP = N(tele)-(5'-uridylyl)-L-histidyl-[protein] + diphosphate. The enzyme catalyses L-seryl-[protein] + UTP = O-(5'-uridylyl)-L-seryl-[protein] + diphosphate. It catalyses the reaction L-tyrosyl-[protein] + UTP = O-(5'-uridylyl)-L-tyrosyl-[protein] + diphosphate. Functionally, nucleotidyltransferase involved in the post-translational modification of proteins. It can catalyze the addition of adenosine monophosphate (AMP) or uridine monophosphate (UMP) to a protein, resulting in modifications known as AMPylation and UMPylation. The chain is Protein nucleotidyltransferase YdiU from Burkholderia pseudomallei (strain K96243).